The chain runs to 313 residues: Ribosomal RNA small subunit methyltransferase H (313 aa).

S-adenosyl-L-methionine-binding positions include 35–37, aspartate 55, phenylalanine 79, aspartate 100, and glutamine 107; that span reads GGH.

It belongs to the methyltransferase superfamily. RsmH family.

Its subcellular location is the cytoplasm. It catalyses the reaction cytidine(1402) in 16S rRNA + S-adenosyl-L-methionine = N(4)-methylcytidine(1402) in 16S rRNA + S-adenosyl-L-homocysteine + H(+). Its function is as follows. Specifically methylates the N4 position of cytidine in position 1402 (C1402) of 16S rRNA. The sequence is that of Ribosomal RNA small subunit methyltransferase H from Burkholderia thailandensis (strain ATCC 700388 / DSM 13276 / CCUG 48851 / CIP 106301 / E264).